Here is a 138-residue protein sequence, read N- to C-terminus: Glia maturation factor (138 aa).

The ADF-H domain maps to 3–138 (DNQICDISNE…TEEWLKAKLK (136 aa)).

This sequence belongs to the actin-binding proteins ADF family. GMF subfamily. In terms of tissue distribution, in ovaries, expressed in follicular epithelium, in polar cells, migrating border cells, and centripedal cells (at protein level).

It localises to the cell projection. It is found in the lamellipodium. The protein localises to the cytoplasm. Its subcellular location is the perinuclear region. The protein resides in the nucleus. It localises to the cell cortex. Its function is as follows. Inhibits Arp2/3-mediated actin nucleation. Together with flr, promotes Arp2/3-nucleated actin filament array disassembly. Promotes debranching. Regulates lamellipodial protrusion dynamics possibly by facilitating lamellipodial retraction. In egg chambers, enhances the retraction dynamics of cellular extensions in border cells and thus together with flr plays an important role in directional migration of border cell clusters. The chain is Glia maturation factor from Drosophila melanogaster (Fruit fly).